Here is a 27-residue protein sequence, read N- to C-terminus: Metalloproteinase inhibitor 1 (27 aa).

Positions 1-12 (IEPERQEEEEEE) are enriched in acidic residues. The interval 1–27 (IEPERQEEEEEETRQRVRRGQVRQQQQ) is disordered.

Its function is as follows. Metalloproteinase inhibitor, active on a globulinase from L.albus seeds, thermolysin and gelatinase B. This is Metalloproteinase inhibitor 1 from Lupinus albus (White lupine).